A 120-amino-acid polypeptide reads, in one-letter code: UPF0091 protein PH1455 (120 aa).

This sequence belongs to the UPF0091 family.

The protein is UPF0091 protein PH1455 of Pyrococcus horikoshii (strain ATCC 700860 / DSM 12428 / JCM 9974 / NBRC 100139 / OT-3).